Reading from the N-terminus, the 119-residue chain is uncharacterized protein (119 aa).

The disordered stretch occupies residues 64–119 (SAPLGLKEVQKKSNEGLNEVQGAADINKQKRPANSQDSSSVEGDIQNFLEKVTGKN). Residues 95–104 (PANSQDSSSV) are compositionally biased toward polar residues.

This is an uncharacterized protein from Nostoc sp. (strain PCC 7120 / SAG 25.82 / UTEX 2576).